We begin with the raw amino-acid sequence, 300 residues long: Light-independent protochlorophyllide reductase iron-sulfur ATP-binding protein (300 aa).

ATP is bound by residues 10-15 and lysine 39; that span reads GIGKST. Residue serine 14 coordinates Mg(2+). [4Fe-4S] cluster-binding residues include cysteine 95 and cysteine 129. 180–181 contributes to the ATP binding site; it reads NR.

Belongs to the NifH/BchL/ChlL family. Homodimer. Protochlorophyllide reductase is composed of three subunits; ChlL, ChlN and ChlB. [4Fe-4S] cluster serves as cofactor.

The protein localises to the plastid. It localises to the chloroplast. It carries out the reaction chlorophyllide a + oxidized 2[4Fe-4S]-[ferredoxin] + 2 ADP + 2 phosphate = protochlorophyllide a + reduced 2[4Fe-4S]-[ferredoxin] + 2 ATP + 2 H2O. The protein operates within porphyrin-containing compound metabolism; chlorophyll biosynthesis (light-independent). Its function is as follows. Component of the dark-operative protochlorophyllide reductase (DPOR) that uses Mg-ATP and reduced ferredoxin to reduce ring D of protochlorophyllide (Pchlide) to form chlorophyllide a (Chlide). This reaction is light-independent. The L component serves as a unique electron donor to the NB-component of the complex, and binds Mg-ATP. The protein is Light-independent protochlorophyllide reductase iron-sulfur ATP-binding protein of Auxenochlorella protothecoides (Green microalga).